The chain runs to 427 residues: Hydroxylamine reductase (427 aa).

[4Fe-4S] cluster contacts are provided by Cys-3, Cys-6, Cys-15, and Cys-21. Positions 129, 153, 197, 283, 311, 336, 370, and 372 each coordinate hybrid [4Fe-2O-2S] cluster. Residue Cys-283 is modified to Cysteine persulfide.

It belongs to the HCP family. Requires [4Fe-4S] cluster as cofactor. The cofactor is hybrid [4Fe-2O-2S] cluster.

It localises to the cytoplasm. The catalysed reaction is A + NH4(+) + H2O = hydroxylamine + AH2 + H(+). Catalyzes the reduction of hydroxylamine to form NH(3) and H(2)O. This chain is Hydroxylamine reductase, found in Methanothermobacter thermautotrophicus (strain ATCC 29096 / DSM 1053 / JCM 10044 / NBRC 100330 / Delta H) (Methanobacterium thermoautotrophicum).